We begin with the raw amino-acid sequence, 72 residues long: Translation initiation factor IF-1 (72 aa).

In terms of domain architecture, S1-like spans 1–72 (MAKEDVIEVE…NRGRIIYRFK (72 aa)).

Belongs to the IF-1 family. In terms of assembly, component of the 30S ribosomal translation pre-initiation complex which assembles on the 30S ribosome in the order IF-2 and IF-3, IF-1 and N-formylmethionyl-tRNA(fMet); mRNA recruitment can occur at any time during PIC assembly.

Its subcellular location is the cytoplasm. Its function is as follows. One of the essential components for the initiation of protein synthesis. Stabilizes the binding of IF-2 and IF-3 on the 30S subunit to which N-formylmethionyl-tRNA(fMet) subsequently binds. Helps modulate mRNA selection, yielding the 30S pre-initiation complex (PIC). Upon addition of the 50S ribosomal subunit IF-1, IF-2 and IF-3 are released leaving the mature 70S translation initiation complex. This chain is Translation initiation factor IF-1, found in Syntrophomonas wolfei subsp. wolfei (strain DSM 2245B / Goettingen).